A 397-amino-acid polypeptide reads, in one-letter code: Acetate kinase (397 aa).

Asn7 lines the Mg(2+) pocket. Lys14 contacts ATP. Substrate is bound at residue Arg91. Asp148 serves as the catalytic Proton donor/acceptor. ATP contacts are provided by residues His208–Gly212, Asp283–Arg285, and Gly331–Asn335. Position 384 (Glu384) interacts with Mg(2+).

Belongs to the acetokinase family. As to quaternary structure, homodimer. Requires Mg(2+) as cofactor. Mn(2+) serves as cofactor.

Its subcellular location is the cytoplasm. The enzyme catalyses acetate + ATP = acetyl phosphate + ADP. The protein operates within metabolic intermediate biosynthesis; acetyl-CoA biosynthesis; acetyl-CoA from acetate: step 1/2. In terms of biological role, catalyzes the formation of acetyl phosphate from acetate and ATP. Can also catalyze the reverse reaction. This chain is Acetate kinase, found in Treponema denticola (strain ATCC 35405 / DSM 14222 / CIP 103919 / JCM 8153 / KCTC 15104).